The following is a 147-amino-acid chain: uncharacterized protein (147 aa).

The segment at 51 to 72 (VTSSMSVMNDSEECPLINGPSM) is disordered.

This is an uncharacterized protein from Gallid herpesvirus 2 (strain GA) (GaHV-2).